A 197-amino-acid chain; its full sequence is Large ribosomal subunit protein bL25 (197 aa).

Belongs to the bacterial ribosomal protein bL25 family. CTC subfamily. Part of the 50S ribosomal subunit; part of the 5S rRNA/L5/L18/L25 subcomplex. Contacts the 5S rRNA. Binds to the 5S rRNA independently of L5 and L18.

In terms of biological role, this is one of the proteins that binds to the 5S RNA in the ribosome where it forms part of the central protuberance. This is Large ribosomal subunit protein bL25 from Carboxydothermus hydrogenoformans (strain ATCC BAA-161 / DSM 6008 / Z-2901).